A 270-amino-acid chain; its full sequence is UBX domain-containing protein 8 (270 aa).

Position 1 (Met-1) is a topological domain, cytoplasmic. A helical transmembrane segment spans residues 2–22 (ASRGVVGIFFLSAVPLVCLEL). The Lumenal portion of the chain corresponds to 23–33 (RRGIPDIGIKD). Residues 34–54 (FLLLCGRILLLLALLTLIISV) traverse the membrane as a helical segment. At 55–270 (TTSWLNSFKS…LILEEKEQTN (216 aa)) the chain is on the cytoplasmic side. Residues 130–171 (SGHKLGGDEGTSQTSFETSNREAAKSQNLPKPLTEFPSPAEQ) are disordered. Ser-167 bears the Phosphoserine mark. Positions 187–263 (TAEEVVTVAL…GITVDTVLIL (77 aa)) constitute a UBX domain.

In terms of assembly, interacts with SYVN1 and VCP. Expressed abundantly in ovary and testis, and weakly in all other tissues tested.

The protein resides in the endoplasmic reticulum membrane. Functionally, involved in endoplasmic reticulum-associated degradation (ERAD) for misfolded lumenal proteins, possibly by tethering VCP to the endoplasmic reticulum membrane. May play a role in reproduction. The protein is UBX domain-containing protein 8 (UBXN8) of Homo sapiens (Human).